The primary structure comprises 33 residues: Dermaseptin-H6 (33 aa).

L33 carries the post-translational modification Leucine amide.

As to expression, expressed by the skin glands.

It localises to the secreted. In terms of biological role, has antimicrobial activity. This is Dermaseptin-H6 from Pithecopus hypochondrialis (Orange-legged leaf frog).